Consider the following 131-residue polypeptide: Lactose permease (131 aa).

The Cytoplasmic portion of the chain corresponds to 1–13 (MKFSELAPRERHN). The helical transmembrane segment at 14–34 (FVYFLLFFFFYHFIMSAYFPF) threads the bilayer. At 35 to 50 (FPVWLADVNHLTKTET) the chain is on the periplasmic side. A helical transmembrane segment spans residues 51 to 71 (GIVFSSISLFAIIFQPVFGLM). Topologically, residues 72 to 80 (SDKLGLRKH) are cytoplasmic. The helical transmembrane segment at 81 to 101 (LLWTITVLLILFAPFFIFVFS) threads the bilayer. A topological domain (periplasmic) is located at residue P102. A helical membrane pass occupies residues 103–123 (LLQMNIIAGSLVGGIYLGIVF). Over 124–131 (STAPGVGS) the chain is Cytoplasmic.

It belongs to the major facilitator superfamily. Oligosaccharide:H(+) symporter (OHS) (TC 2.A.1.5) family.

The protein resides in the cell inner membrane. It catalyses the reaction lactose(in) + H(+)(in) = lactose(out) + H(+)(out). In terms of biological role, responsible for transport of beta-galactosides into the cell, with the concomitant import of a proton (symport system). This Klebsiella pneumoniae protein is Lactose permease (lacY).